We begin with the raw amino-acid sequence, 367 residues long: Biotin synthase (367 aa).

The region spanning 73 to 308 is the Radical SAM core domain; the sequence is CCGNTVDLCS…EQIIRYAGGR (236 aa). [4Fe-4S] cluster contacts are provided by C91, C95, and C98. The [2Fe-2S] cluster site is built by C136, C173, C233, and R303.

It belongs to the radical SAM superfamily. Biotin synthase family. Homodimer. Requires [4Fe-4S] cluster as cofactor. [2Fe-2S] cluster is required as a cofactor.

It carries out the reaction (4R,5S)-dethiobiotin + (sulfur carrier)-SH + 2 reduced [2Fe-2S]-[ferredoxin] + 2 S-adenosyl-L-methionine = (sulfur carrier)-H + biotin + 2 5'-deoxyadenosine + 2 L-methionine + 2 oxidized [2Fe-2S]-[ferredoxin]. It participates in cofactor biosynthesis; biotin biosynthesis; biotin from 7,8-diaminononanoate: step 2/2. Its function is as follows. Catalyzes the conversion of dethiobiotin (DTB) to biotin by the insertion of a sulfur atom into dethiobiotin via a radical-based mechanism. In Picosynechococcus sp. (strain ATCC 27264 / PCC 7002 / PR-6) (Agmenellum quadruplicatum), this protein is Biotin synthase.